A 614-amino-acid polypeptide reads, in one-letter code: Elongation factor 4 (614 aa).

The 183-residue stretch at 10 to 192 (ALIRNFCIIA…EIVARIPPPV (183 aa)) folds into the tr-type G domain. Residues 22–27 (DHGKST) and 139–142 (NKID) each bind GTP.

The protein belongs to the TRAFAC class translation factor GTPase superfamily. Classic translation factor GTPase family. LepA subfamily.

Its subcellular location is the cell membrane. It catalyses the reaction GTP + H2O = GDP + phosphate + H(+). Required for accurate and efficient protein synthesis under certain stress conditions. May act as a fidelity factor of the translation reaction, by catalyzing a one-codon backward translocation of tRNAs on improperly translocated ribosomes. Back-translocation proceeds from a post-translocation (POST) complex to a pre-translocation (PRE) complex, thus giving elongation factor G a second chance to translocate the tRNAs correctly. Binds to ribosomes in a GTP-dependent manner. This is Elongation factor 4 from Thermobifida fusca (strain YX).